The sequence spans 318 residues: Mitochondrial fission regulator 1 (318 aa).

Disordered regions lie at residues 101 to 121 and 154 to 193; these read RPLRRQRSLPSLHQVEPAQQS and QEQSAQSTAPAPGGPPVPPPMVPVPPPPPPPPPCPTPSMQ. Residues 124–157 are a coiled coil; sequence VINDEAIQKISVLETELAKLRAQIAQIVQAQEQS. Residues 154–164 show a composition bias toward low complexity; the sequence is QEQSAQSTAPA. Positions 165–189 are enriched in pro residues; the sequence is PGGPPVPPPMVPVPPPPPPPPPCPT. Residues 168–296 are necessary and sufficient to promote mitochondrial fission; that stretch reads PPVPPPMVPV…TFTFTAFENK (129 aa).

The protein belongs to the MTFR1 family.

Its subcellular location is the mitochondrion. Functionally, may play a role in mitochondrial aerobic respiration. May also regulate mitochondrial organization and fission. In Danio rerio (Zebrafish), this protein is Mitochondrial fission regulator 1 (mtfr1).